Reading from the N-terminus, the 197-residue chain is Protein FAM219B (197 aa).

Disordered stretches follow at residues 1 to 77 (MATE…HRDH) and 117 to 142 (DENL…YSSA). Phosphoserine is present on residues Ser14, Ser125, and Ser127.

The protein belongs to the FAM219 family.

This is Protein FAM219B (Fam219b) from Mus musculus (Mouse).